The sequence spans 76 residues: Conotoxin TsMLCL-03 (76 aa).

The signal sequence occupies residues 1–19 (MLCLPVFIILLLLASPAAP). The propeptide occupies 20 to 44 (NPLERRIQSDLIRTALEDADMKTPK).

This sequence belongs to the conotoxin T superfamily. Post-translationally, contains 2 disulfide bonds that can be either 'C1-C3, C2-C4' or 'C1-C4, C2-C3', since these disulfide connectivities have been observed for conotoxins with cysteine framework V (for examples, see AC P0DQQ7 and AC P81755). As to expression, expressed by the venom duct.

The protein localises to the secreted. The protein is Conotoxin TsMLCL-03 of Conus tessulatus (Tessellate cone).